We begin with the raw amino-acid sequence, 393 residues long: Protein Njmu-R1 (393 aa).

A disordered region spans residues Met1–Ser74. Ser8 and Ser18 each carry phosphoserine. Acidic residues predominate over residues Leu9 to Ser24.

As to quaternary structure, interacts with TBC1D23; this interaction may be indirect.

May have a role in spermatogenesis. The sequence is that of Protein Njmu-R1 from Mus musculus (Mouse).